The sequence spans 378 residues: L-lactate dehydrogenase (378 aa).

The FMN hydroxy acid dehydrogenase domain occupies 1-378 (MIISASTDYR…ELSRDSLVKR (378 aa)). Tyr-24 is a binding site for substrate. Residues Ser-106 and Gln-127 each contribute to the FMN site. Residue Tyr-129 coordinates substrate. Position 155 (Thr-155) interacts with FMN. Arg-164 is a binding site for substrate. Lys-251 is an FMN binding site. Catalysis depends on His-275, which acts as the Proton acceptor. Arg-278 contributes to the substrate binding site. 306-330 (DSGIRTGLDVVRMLALGADCTMLGR) lines the FMN pocket.

This sequence belongs to the FMN-dependent alpha-hydroxy acid dehydrogenase family. FMN serves as cofactor.

The protein localises to the cell inner membrane. The enzyme catalyses (S)-lactate + A = pyruvate + AH2. Functionally, catalyzes the conversion of L-lactate to pyruvate. Is coupled to the respiratory chain. The sequence is that of L-lactate dehydrogenase from Vibrio cholerae serotype O1 (strain ATCC 39315 / El Tor Inaba N16961).